The chain runs to 250 residues: Aquaporin (250 aa).

Over 1 to 15 (MTRETLKTLQSTFGE) the chain is Cytoplasmic. Residues 16-36 (MVASFVFGFAVYSALLGSALT) traverse the membrane as a helical segment. Residues 37–42 (EQSAAR) lie on the Extracellular side of the membrane. Residues 43-63 (VIVGLTVGFSGICVIYSFCDV) traverse the membrane as a helical segment. The Cytoplasmic segment spans residues 64–86 (TVAHFNPAITLAAILTCKLGVLR). The short motif at 69–71 (NPA) is the NPA element. The helical transmembrane segment at 87–107 (GIGYIVAQYIGFILAVCALLP) threads the bilayer. The Extracellular segment spans residues 108-133 (CSPVGYKETLNIIRPTPSPFGGDNLN). The helical transmembrane segment at 134-154 (VFFTEFFLTAILVHVAFATAV) threads the bilayer. The Cytoplasmic segment spans residues 155-179 (NPYKPKTDTEGKFVDPDEEEPVDRR). A helical transmembrane segment spans residues 180–200 (ITAPLCIGLTLGFLAFLGLAS). Over 201–224 (SGGAFNPGLTLAPVIMSNTWNHFW) the chain is Extracellular. The NPG motif lies at 206 to 208 (NPG). Residues 225–245 (AYFAGQYLGGFVGGLLQVLVL) traverse the membrane as a helical segment. Residues 246–250 (YKLSF) are Cytoplasmic-facing.

The protein belongs to the MIP/aquaporin (TC 1.A.8) family.

The protein localises to the cell membrane. Functionally, water channel required to facilitate the transport of water across membranes. Involved in osmotolerance. The protein is Aquaporin (AQP) of Encephalitozoon cuniculi (strain GB-M1) (Microsporidian parasite).